We begin with the raw amino-acid sequence, 692 residues long: MISKSRRSFIRLAAGTVGATVATSMLPSSIQAALAIPAHRRHGNLKDVEHVVILMQENRSFDHYFGTLKGVRGFGDRMAIPLPDGQRVWHQKGSKGEILPYHFDTSTTSAQRVDGTPHTWPDAQQAWNEGRMDKWLPAKTERSLGYYKEQDIAFQFAMANAFTICDAYHCSFQGGTNPNRLFLWTGTNDPLGQHGGPVTTNDHDSNGPVEQGYTWTTYPERLQAAGITWRVYQDMADNFSDNPLIGFRQYRAAAPDSPLIVNGLSTWKLDALKRDVLANSLPQVSWIVAPAKYSEHPGPSSPIWGAEYTSWVLDALTANPEVWSKTALLVMFDENDGFFDHVAPPAAPSLNKDGTLRGKTTADATLEWHTKGDIRYRNQPYGLGPRVPMYVISPWSKGGWVNSQVFDHTSVIRFLEQRFGVMEPNISPWRRAVCGDLTSAFNFANPNNEPFPELPDTSQADAIVASQIKLPKPKPPAVAAMPKQEMGIRPARALPYELGVHARYRSGGDALSLTFANTGKAGAVFQVFDLLDSENPPKRYTVGARKRLHDSFQGDASGDYHLEVHGPNGFLRVFRGNLRRDLAERKAPLPEVRIDYEPLFGNLRVQLINRGRHPVKLTVKDNVYRQGERRTVNVPPGQRREVRYSLRSSGNWYDFSVSAQGADSFLRRFSGRMEDGRSGFSDPGMGLGTLTF.

Residues 1-35 (MISKSRRSFIRLAAGTVGATVATSMLPSSIQAALA) constitute a signal peptide (tat-type signal).

Belongs to the bacterial phospholipase C family. Post-translationally, predicted to be exported by the Tat system. The position of the signal peptide cleavage has not been experimentally proven.

It carries out the reaction a 1,2-diacyl-sn-glycero-3-phosphocholine + H2O = phosphocholine + a 1,2-diacyl-sn-glycerol + H(+). Functionally, hydrolyzes phosphatidylserine as well as phosphatidylcholine. The protein is Non-hemolytic phospholipase C (plcN) of Pseudomonas aeruginosa (strain ATCC 15692 / DSM 22644 / CIP 104116 / JCM 14847 / LMG 12228 / 1C / PRS 101 / PAO1).